Reading from the N-terminus, the 157-residue chain is Crossover junction endodeoxyribonuclease RuvC (157 aa).

Active-site residues include Asp-7, Glu-66, and Asp-139. Residues Asp-7, Glu-66, and Asp-139 each contribute to the Mg(2+) site.

It belongs to the RuvC family. In terms of assembly, homodimer which binds Holliday junction (HJ) DNA. The HJ becomes 2-fold symmetrical on binding to RuvC with unstacked arms; it has a different conformation from HJ DNA in complex with RuvA. In the full resolvosome a probable DNA-RuvA(4)-RuvB(12)-RuvC(2) complex forms which resolves the HJ. Requires Mg(2+) as cofactor.

It is found in the cytoplasm. It catalyses the reaction Endonucleolytic cleavage at a junction such as a reciprocal single-stranded crossover between two homologous DNA duplexes (Holliday junction).. Its function is as follows. The RuvA-RuvB-RuvC complex processes Holliday junction (HJ) DNA during genetic recombination and DNA repair. Endonuclease that resolves HJ intermediates. Cleaves cruciform DNA by making single-stranded nicks across the HJ at symmetrical positions within the homologous arms, yielding a 5'-phosphate and a 3'-hydroxyl group; requires a central core of homology in the junction. The consensus cleavage sequence is 5'-(A/T)TT(C/G)-3'. Cleavage occurs on the 3'-side of the TT dinucleotide at the point of strand exchange. HJ branch migration catalyzed by RuvA-RuvB allows RuvC to scan DNA until it finds its consensus sequence, where it cleaves and resolves the cruciform DNA. This is Crossover junction endodeoxyribonuclease RuvC from Campylobacter curvus (strain 525.92).